The following is a 158-amino-acid chain: Phosphopantetheine adenylyltransferase (158 aa).

Position 9 (Thr9) interacts with substrate. ATP-binding positions include 9–10 and His17; that span reads TF. 3 residues coordinate substrate: Lys41, Leu73, and Arg87. ATP-binding positions include 88–90, Glu98, and 123–129; these read GVR and WSYVSST.

This sequence belongs to the bacterial CoaD family. In terms of assembly, homohexamer. Mg(2+) is required as a cofactor.

It is found in the cytoplasm. It catalyses the reaction (R)-4'-phosphopantetheine + ATP + H(+) = 3'-dephospho-CoA + diphosphate. It participates in cofactor biosynthesis; coenzyme A biosynthesis; CoA from (R)-pantothenate: step 4/5. Functionally, reversibly transfers an adenylyl group from ATP to 4'-phosphopantetheine, yielding dephospho-CoA (dPCoA) and pyrophosphate. In Pasteurella multocida (strain Pm70), this protein is Phosphopantetheine adenylyltransferase.